The primary structure comprises 1302 residues: RNA-directed RNA polymerase (1302 aa).

Residues Val562 to Val823 form the RdRp catalytic domain.

The protein belongs to the reoviridae RNA-directed RNA polymerase family.

The enzyme catalyses RNA(n) + a ribonucleoside 5'-triphosphate = RNA(n+1) + diphosphate. This is RNA-directed RNA polymerase (Segment-1) from Antilocapra americana (Pronghorn).